Consider the following 215-residue polypeptide: Pyrrolidone-carboxylate peptidase (215 aa).

Catalysis depends on residues Glu-80, Cys-143, and His-167.

The protein belongs to the peptidase C15 family. Homotetramer.

Its subcellular location is the cytoplasm. It carries out the reaction Release of an N-terminal pyroglutamyl group from a polypeptide, the second amino acid generally not being Pro.. Its function is as follows. Removes 5-oxoproline from various penultimate amino acid residues except L-proline. The sequence is that of Pyrrolidone-carboxylate peptidase from Bacillus cereus (strain ZK / E33L).